The following is a 472-amino-acid chain: Chromosomal replication initiator protein DnaA (472 aa).

The segment at 1–73 (MSNMEQDRWS…LSCWQAELPE (73 aa)) is domain I, interacts with DnaA modulators. Residues 73–128 (EVNRVDLTVRSPVRCATPAKEVPAPVESRRDEQRPSAERSNGATPVSANHDALGGS) form a domain II region. Positions 90–124 (PAKEVPAPVESRRDEQRPSAERSNGATPVSANHDA) are disordered. Over residues 99 to 109 (ESRRDEQRPSA) the composition is skewed to basic and acidic residues. A compositionally biased stretch (polar residues) spans 110–119 (ERSNGATPVS). Residues 129–351 (PLDPRLTFAS…GAINRLLAHS (223 aa)) are domain III, AAA+ region. 4 residues coordinate ATP: Gly176, Gly178, Lys179, and Thr180. Residues 352 to 472 (KLNNQPVTLE…VESLKRQLQE (121 aa)) form a domain IV, binds dsDNA region.

It belongs to the DnaA family. In terms of assembly, oligomerizes as a right-handed, spiral filament on DNA at oriC.

It is found in the cytoplasm. Functionally, plays an essential role in the initiation and regulation of chromosomal replication. ATP-DnaA binds to the origin of replication (oriC) to initiate formation of the DNA replication initiation complex once per cell cycle. Binds the DnaA box (a 9 base pair repeat at the origin) and separates the double-stranded (ds)DNA. Forms a right-handed helical filament on oriC DNA; dsDNA binds to the exterior of the filament while single-stranded (ss)DNA is stabiized in the filament's interior. The ATP-DnaA-oriC complex binds and stabilizes one strand of the AT-rich DNA unwinding element (DUE), permitting loading of DNA polymerase. After initiation quickly degrades to an ADP-DnaA complex that is not apt for DNA replication. Binds acidic phospholipids. The sequence is that of Chromosomal replication initiator protein DnaA from Rhodopseudomonas palustris (strain ATCC BAA-98 / CGA009).